A 2754-amino-acid chain; its full sequence is Neurobeachin-like protein 2 (2754 aa).

Disordered stretches follow at residues Thr1298–Pro1338 and Ser1364–Ser1438. Pro residues-rich tracts occupy residues Ser1301–Glu1323 and Thr1388–Ala1400. A compositionally biased stretch (polar residues) spans Gly1425 to Thr1437. At Ser1647 the chain carries Phosphoserine. Thr1867 carries the phosphothreonine modification. A BEACH-type PH domain is found at Glu1915–Leu2040. In terms of domain architecture, BEACH spans Arg2053–Arg2345. WD repeat units lie at residues Leu2386 to Pro2424, Arg2448 to Arg2491, Leu2494 to Leu2531, Lys2544 to Val2582, Ala2589 to Leu2631, Lys2639 to Leu2674, and Pro2682 to Gly2717. A phosphoserine mark is found at Ser2739 and Ser2742.

The protein belongs to the WD repeat neurobeachin family. Expressed in megakaryocytes.

It localises to the endoplasmic reticulum. In terms of biological role, probably involved in thrombopoiesis. Plays a role in the development or secretion of alpha-granules, that contain several growth factors important for platelet biogenesis. The chain is Neurobeachin-like protein 2 (NBEAL2) from Homo sapiens (Human).